The following is a 235-amino-acid chain: U1 small nuclear ribonucleoprotein C (235 aa).

The Matrin-type zinc finger occupies 4 to 36 (YYCEYCDIYLTHSSPVGRRQHIHGRKHISAKIE). The tract at residues 131–235 (QAHNNYSYPN…SKEHIESDIS (105 aa)) is disordered. A compositionally biased stretch (low complexity) spans 134-168 (NNYSYPNSINPSNQINYSNNYGSNNFNNSNEFNKN). The segment covering 169 to 189 (MNEKDNINNNDIHDNKVKTDE) has biased composition (basic and acidic residues). Low complexity predominate over residues 192–203 (PINNDNLNNTRN). Composition is skewed to basic and acidic residues over residues 205–217 (SYEE…DHKK) and 225–235 (NSKEHIESDIS).

It belongs to the U1 small nuclear ribonucleoprotein C family. In terms of assembly, U1 snRNP is composed of the 7 core Sm proteins B/B', D1, D2, D3, E, F and G that assemble in a heptameric protein ring on the Sm site of the small nuclear RNA to form the core snRNP, and at least 3 U1 snRNP-specific proteins U1-70K, U1-A and U1-C. U1-C interacts with U1 snRNA and the 5' splice-site region of the pre-mRNA.

The protein resides in the nucleus. Component of the spliceosomal U1 snRNP, which is essential for recognition of the pre-mRNA 5' splice-site and the subsequent assembly of the spliceosome. U1-C is directly involved in initial 5' splice-site recognition for both constitutive and regulated alternative splicing. The interaction with the 5' splice-site seems to precede base-pairing between the pre-mRNA and the U1 snRNA. Stimulates commitment or early (E) complex formation by stabilizing the base pairing of the 5' end of the U1 snRNA and the 5' splice-site region. The protein is U1 small nuclear ribonucleoprotein C of Plasmodium falciparum (isolate 3D7).